Consider the following 393-residue polypeptide: NAD(P)H-quinone oxidoreductase subunit H, chloroplastic (393 aa).

The protein belongs to the complex I 49 kDa subunit family. In terms of assembly, NDH is composed of at least 16 different subunits, 5 of which are encoded in the nucleus.

The protein resides in the plastid. It is found in the chloroplast thylakoid membrane. It carries out the reaction a plastoquinone + NADH + (n+1) H(+)(in) = a plastoquinol + NAD(+) + n H(+)(out). It catalyses the reaction a plastoquinone + NADPH + (n+1) H(+)(in) = a plastoquinol + NADP(+) + n H(+)(out). Functionally, NDH shuttles electrons from NAD(P)H:plastoquinone, via FMN and iron-sulfur (Fe-S) centers, to quinones in the photosynthetic chain and possibly in a chloroplast respiratory chain. The immediate electron acceptor for the enzyme in this species is believed to be plastoquinone. Couples the redox reaction to proton translocation, and thus conserves the redox energy in a proton gradient. This chain is NAD(P)H-quinone oxidoreductase subunit H, chloroplastic, found in Morus indica (Mulberry).